Reading from the N-terminus, the 326-residue chain is DNA-directed RNA polymerase subunit alpha (326 aa).

The alpha N-terminal domain (alpha-NTD) stretch occupies residues 1–231 (MQTALLKPKI…DQLSVFAALE (231 aa)). Positions 247–326 (IDPILLRPVD…ENWPPAGLEK (80 aa)) are alpha C-terminal domain (alpha-CTD).

The protein belongs to the RNA polymerase alpha chain family. Homodimer. The RNAP catalytic core consists of 2 alpha, 1 beta, 1 beta' and 1 omega subunit. When a sigma factor is associated with the core the holoenzyme is formed, which can initiate transcription.

The enzyme catalyses RNA(n) + a ribonucleoside 5'-triphosphate = RNA(n+1) + diphosphate. In terms of biological role, DNA-dependent RNA polymerase catalyzes the transcription of DNA into RNA using the four ribonucleoside triphosphates as substrates. The sequence is that of DNA-directed RNA polymerase subunit alpha from Ralstonia nicotianae (strain ATCC BAA-1114 / GMI1000) (Ralstonia solanacearum).